We begin with the raw amino-acid sequence, 606 residues long: Elongation factor 4 (606 aa).

Positions 10–192 (ENIRNFSIIA…AIVQQLPAPK (183 aa)) constitute a tr-type G domain. GTP contacts are provided by residues 22-27 (DHGKST) and 139-142 (NKID).

It belongs to the TRAFAC class translation factor GTPase superfamily. Classic translation factor GTPase family. LepA subfamily.

Its subcellular location is the cell membrane. It catalyses the reaction GTP + H2O = GDP + phosphate + H(+). In terms of biological role, required for accurate and efficient protein synthesis under certain stress conditions. May act as a fidelity factor of the translation reaction, by catalyzing a one-codon backward translocation of tRNAs on improperly translocated ribosomes. Back-translocation proceeds from a post-translocation (POST) complex to a pre-translocation (PRE) complex, thus giving elongation factor G a second chance to translocate the tRNAs correctly. Binds to ribosomes in a GTP-dependent manner. The chain is Elongation factor 4 from Lawsonia intracellularis (strain PHE/MN1-00).